The following is a 521-amino-acid chain: Protein PLM2 (521 aa).

Positions 1-63 (MSHLFPPSSP…SIGRQSSPVK (63 aa)) are disordered. Positions 51–63 (PSSSIGRQSSPVK) are enriched in polar residues. The FHA domain occupies 102 to 156 (LAIGRKKSVCNIILPCRKNISRQHAFISYAADRNEIKLECNGTNGLSVHLPYSMQ). Phosphoserine is present on residues Ser-281, Ser-295, Ser-302, and Ser-384.

Belongs to the PLM2/TOS4 family. Phosphorylated by CDC28.

The protein resides in the nucleus. In terms of biological role, binds to the promoters of genes with functions important for the G1/S (start) transition; primarily genes involved in DNA synthesis and repair, chromosome segregation, nuclear division and transcription. The polypeptide is Protein PLM2 (PLM2) (Saccharomyces cerevisiae (strain ATCC 204508 / S288c) (Baker's yeast)).